We begin with the raw amino-acid sequence, 183 residues long: Ion-translocating oxidoreductase complex subunit B (183 aa).

The hydrophobic stretch occupies residues 1-23 (MLSALLVMAAIAVVLGAALGFAA). Residues 29–88 (EGDPLVDKIDAILPQTQCGQCGYPGCKPYAQAIAQGEADINQCPPGGEEGVRKLADLLGR) enclose the 4Fe-4S domain. Residues cysteine 46, cysteine 49, cysteine 54, cysteine 71, cysteine 113, cysteine 116, cysteine 119, cysteine 123, cysteine 143, cysteine 146, cysteine 149, and cysteine 153 each contribute to the [4Fe-4S] cluster site. 4Fe-4S ferredoxin-type domains lie at 104–133 (AVAYIDENVCIGCTLCLQACPVDAIVGAAK) and 135–163 (MHTVVDPLCTGCELCVAPCPVDCIYMEPV).

Belongs to the 4Fe4S bacterial-type ferredoxin family. RnfB subfamily. In terms of assembly, the complex is composed of six subunits: RnfA, RnfB, RnfC, RnfD, RnfE and RnfG. [4Fe-4S] cluster serves as cofactor.

The protein localises to the cell inner membrane. Functionally, part of a membrane-bound complex that couples electron transfer with translocation of ions across the membrane. The protein is Ion-translocating oxidoreductase complex subunit B of Azoarcus sp. (strain BH72).